A 460-amino-acid chain; its full sequence is Cobyrinate a,c-diamide synthase (460 aa).

A GATase cobBQ-type domain is found at 248–440 (KIAVARDAAF…THFHFGSSTK (193 aa)). Cys-331 (nucleophile) is an active-site residue.

It belongs to the CobB/CbiA family. Requires Mg(2+) as cofactor.

The catalysed reaction is cob(II)yrinate + 2 L-glutamine + 2 ATP + 2 H2O = cob(II)yrinate a,c diamide + 2 L-glutamate + 2 ADP + 2 phosphate + 2 H(+). It participates in cofactor biosynthesis; adenosylcobalamin biosynthesis; cob(II)yrinate a,c-diamide from sirohydrochlorin (anaerobic route): step 10/10. Functionally, catalyzes the ATP-dependent amidation of the two carboxylate groups at positions a and c of cobyrinate, using either L-glutamine or ammonia as the nitrogen source. The polypeptide is Cobyrinate a,c-diamide synthase (Priestia megaterium (Bacillus megaterium)).